Consider the following 565-residue polypeptide: MKTTIILILLTHWVYSQNPTSGNNTATLCLGHHAVANGTLVKTITDDQIEVTNATELVQSISIGKICNNSYRVLDGRNCTLIDAMLGDPHCDVFQYENWDLFIERSSAFSNCYPYDIPDYASLRSIVASSGTLEFTAEGFTWTGVTQNGRSGACKRGSADSFFSRLNWLTKSGNSYPTLNVTMPNNNNFDKLYIWGIHHPSSNNEQTKLYIQESGRVTVSTKRSQQTIIPNIGSRPWVRGQSGRISIYWTIVKPGDILMINSNGNLVAPRGYFKLRTGKSSVMRSDAPIDTCVSECITPNGSIPNDKPFQNVNKVTYGKCPKYIRQNTLKLATGMRNVPEKQIRGIFGAIAGFIENGWEGMVDGWYGFRYQNSEGTGQAGDLKSTQAAIDQINGKLNRVIERTNEKFHQIEKEFSEVEGRIQDLEKYVEDTKIDLWSYNAELLVALENQHTIDLTDAEMNKLFEKTRRQLRENAEDMGGGCFKIYHKCDNACIGSIRNGTYDHYIYRDEALNNRFQIKGVELKSGYKDWILWISFAISCFLICVVLLGFIMWACQKGNIRCNICI.

Positions 1 to 16 are cleaved as a signal peptide; it reads MKTTIILILLTHWVYS. At 17–529 the chain is on the extracellular side; the sequence is QNPTSGNNTA…VELKSGYKDW (513 aa). Residues asparagine 23, asparagine 37, asparagine 53, asparagine 68, and asparagine 78 are each glycosylated (N-linked (GlcNAc...) asparagine; by host). 6 cysteine pairs are disulfide-bonded: cysteine 29-cysteine 481, cysteine 67-cysteine 292, cysteine 79-cysteine 91, cysteine 112-cysteine 154, cysteine 296-cysteine 320, and cysteine 488-cysteine 492. N-linked (GlcNAc...) asparagine; by host glycans are attached at residues asparagine 180 and asparagine 300. Asparagine 498 carries N-linked (GlcNAc...) asparagine; by host glycosylation. A helical transmembrane segment spans residues 530 to 550; sequence ILWISFAISCFLICVVLLGFI. At 551–565 the chain is on the cytoplasmic side; it reads MWACQKGNIRCNICI. 3 S-palmitoyl cysteine; by host lipidation sites follow: cysteine 554, cysteine 561, and cysteine 564.

Belongs to the influenza viruses hemagglutinin family. Homotrimer of disulfide-linked HA1-HA2. In terms of processing, palmitoylated. In natural infection, inactive HA is matured into HA1 and HA2 outside the cell by one or more trypsin-like, arginine-specific endoprotease secreted by the bronchial epithelial cells. One identified protease that may be involved in this process is secreted in lungs by club cells.

The protein localises to the virion membrane. The protein resides in the host apical cell membrane. Its function is as follows. Binds to sialic acid-containing receptors on the cell surface, bringing about the attachment of the virus particle to the cell. This attachment induces virion internalization of about two third of the virus particles through clathrin-dependent endocytosis and about one third through a clathrin- and caveolin-independent pathway. Plays a major role in the determination of host range restriction and virulence. Class I viral fusion protein. Responsible for penetration of the virus into the cell cytoplasm by mediating the fusion of the membrane of the endocytosed virus particle with the endosomal membrane. Low pH in endosomes induces an irreversible conformational change in HA2, releasing the fusion hydrophobic peptide. Several trimers are required to form a competent fusion pore. Functionally, binds to sialic acid-containing receptors on the cell surface, bringing about the attachment of the virus particle to the cell. This attachment induces virion internalization either through clathrin-dependent endocytosis or through clathrin- and caveolin-independent pathway. Plays a major role in the determination of host range restriction and virulence. Class I viral fusion protein. Responsible for penetration of the virus into the cell cytoplasm by mediating the fusion of the membrane of the endocytosed virus particle with the endosomal membrane. Low pH in endosomes induces an irreversible conformational change in HA2, releasing the fusion hydrophobic peptide. Several trimers are required to form a competent fusion pore. The chain is Hemagglutinin from Influenza A virus (strain A/Equine/Tennessee/5/1986 H3N8).